A 284-amino-acid polypeptide reads, in one-letter code: Tropomyosin (284 aa).

Residues 1 to 47 (MDAIKKKMQAMKIEKDNAMDRADAAEEKARQQQERVEKLEEELRDTQ) are disordered. Residues 1–284 (MDAIKKKMQA…DQTFQELSGY (284 aa)) are a coiled coil. A compositionally biased stretch (basic and acidic residues) spans 12 to 38 (KIEKDNAMDRADAAEEKARQQQERVEK).

The protein belongs to the tropomyosin family. Homodimer.

Its function is as follows. Tropomyosin, in association with the troponin complex, plays a central role in the calcium dependent regulation of muscle contraction. In Trichinella pseudospiralis (Parasitic roundworm), this protein is Tropomyosin.